Here is a 433-residue protein sequence, read N- to C-terminus: Dihydroorotase (433 aa).

Residues His63 and His65 each contribute to the Zn(2+) site. Substrate-binding positions include 65–67 (HLR) and Asn97. Zn(2+) is bound by residues Asp155, His182, and His235. A substrate-binding site is contributed by Asn283. Position 310 (Asp310) interacts with Zn(2+). Asp310 is a catalytic residue. His314 serves as a coordination point for substrate.

This sequence belongs to the metallo-dependent hydrolases superfamily. DHOase family. Class I DHOase subfamily. It depends on Zn(2+) as a cofactor.

It catalyses the reaction (S)-dihydroorotate + H2O = N-carbamoyl-L-aspartate + H(+). The protein operates within pyrimidine metabolism; UMP biosynthesis via de novo pathway; (S)-dihydroorotate from bicarbonate: step 3/3. Catalyzes the reversible cyclization of carbamoyl aspartate to dihydroorotate. The sequence is that of Dihydroorotase from Anaeromyxobacter dehalogenans (strain 2CP-1 / ATCC BAA-258).